The chain runs to 580 residues: Viral transcription factor IE2 (580 aa).

Basic and acidic residues predominate over residues 1–11 (MESSAKRKMDP). 2 disordered regions span residues 1 to 30 (MESSAKRKMDPDNPDEGPSSKVPRPETPVT) and 99 to 161 (DSSS…VIIK). Residues 99–133 (DSSSTGPTLTTHSCSVSSAPLNKPTPTSVAVTNTP) show a composition bias toward polar residues. Glycyl lysine isopeptide (Lys-Gly) (interchain with G-Cter in SUMO) cross-links involve residues K175 and K180. The SUMO-interacting motif 1/SIM1 motif lies at 199–202 (CIVI). The tract at residues 200–208 (IVISDSEEE) is non-covalent SUMO1 binding region (SIM). A phosphoserine mark is found at S203 and S205. Positions 206–336 (EEEQGEEVET…SKRISELDNE (131 aa)) are disordered. Composition is skewed to low complexity over residues 216–236 (RGATASSPSTGSGTPRVTSPT), 259–271 (SSSSSSSCSSASD), and 302–317 (AASSSLLSCGHQSSGG). Positions 410–413 (IQII) match the SUMO-interacting motif 1/SIM2 motif. The short motif at 501–504 (VDLL) is the SUMO-interacting motif 1/SIM3 element.

This sequence belongs to the HHV-5 IE2 protein family. In terms of assembly, interacts with host SUMO-modified form of TATA-binding protein (TBP)-associated factor 12/TAF12 in a SIM-dependent manner; this interaction increases the transactivation activity of IE2. Interacts with host CHAF1A. Interacts with several components of the host transcriptional machinery including TBP, TF2B and CREB1. Interacts with host DNA replication licensing factor MCM3. Interacts with host PLSCR1; this interaction inhibits IE2 transactivating activity. Phosphorylated by host CK2 at Ser-203 and Ser-205; leading to enhanced SUMOylation. Post-translationally, SUMOylated; SUMOylation is enhanced when IE2 is phosphorylated by host CK2. The sumoylation is necessary for efficient replication of the virus and thus for the function of this viral transcription factor.

It is found in the host nucleus. Functionally, stimulates viral early and late gene expression and thus play a crucial role in the regulation of productive infection. Selectively drives host RNA Pol II transcription initiation at a subset of viral early-late and late promoters without substantially affecting Pol II transcription of expressed host genes. Mechanistically, forms a repressive complex at the major immediate-early promoter region involving direct association with host nucleosomes and TBP. Concerning activation, stimulates transcription by binding nearby, but not within, core promoter regions. In addition, activates quiescent cells to reenter the cell cycle and up-regulates several E2F-responsive genes, which are responsible for pushing the cell into S phase. In S-phase, inhibits cellular DNA synthesis and blocks further cell cycle progression. The chain is Viral transcription factor IE2 (UL122) from Homo sapiens (Human).